A 382-amino-acid polypeptide reads, in one-letter code: Dual-specificity RNA methyltransferase RlmN (382 aa).

Glu95 (proton acceptor) is an active-site residue. The 248-residue stretch at 101-348 (EDDRGTLCIS…TTVRKTRGDD (248 aa)) folds into the Radical SAM core domain. Residues Cys108 and Cys353 are joined by a disulfide bond. Cys115, Cys119, and Cys122 together coordinate [4Fe-4S] cluster. Residues 179–180 (GE), Ser211, 233–235 (SLH), and Asn310 contribute to the S-adenosyl-L-methionine site. Residue Cys353 is the S-methylcysteine intermediate of the active site.

The protein belongs to the radical SAM superfamily. RlmN family. The cofactor is [4Fe-4S] cluster.

Its subcellular location is the cytoplasm. It carries out the reaction adenosine(2503) in 23S rRNA + 2 reduced [2Fe-2S]-[ferredoxin] + 2 S-adenosyl-L-methionine = 2-methyladenosine(2503) in 23S rRNA + 5'-deoxyadenosine + L-methionine + 2 oxidized [2Fe-2S]-[ferredoxin] + S-adenosyl-L-homocysteine. It catalyses the reaction adenosine(37) in tRNA + 2 reduced [2Fe-2S]-[ferredoxin] + 2 S-adenosyl-L-methionine = 2-methyladenosine(37) in tRNA + 5'-deoxyadenosine + L-methionine + 2 oxidized [2Fe-2S]-[ferredoxin] + S-adenosyl-L-homocysteine. Functionally, specifically methylates position 2 of adenine 2503 in 23S rRNA and position 2 of adenine 37 in tRNAs. m2A2503 modification seems to play a crucial role in the proofreading step occurring at the peptidyl transferase center and thus would serve to optimize ribosomal fidelity. This is Dual-specificity RNA methyltransferase RlmN from Bordetella parapertussis (strain 12822 / ATCC BAA-587 / NCTC 13253).